The chain runs to 157 residues: Large ribosomal subunit protein uL11 (157 aa).

It belongs to the universal ribosomal protein uL11 family. In terms of assembly, part of the ribosomal stalk of the 50S ribosomal subunit. Interacts with L10 and the large rRNA to form the base of the stalk. L10 forms an elongated spine to which L12 dimers bind in a sequential fashion forming a multimeric L10(L12)X complex.

Forms part of the ribosomal stalk which helps the ribosome interact with GTP-bound translation factors. The chain is Large ribosomal subunit protein uL11 from Methanocorpusculum labreanum (strain ATCC 43576 / DSM 4855 / Z).